A 174-amino-acid chain; its full sequence is MRFERNDLSGFLGKSFIYNYDQGWRYELYVKNATTIDYRVHSGIVGGRWVKDQTVHISRVGAAIYRVSWAEPTGTSVALTLNLEDYVVHGAIYFPRWIVDEPEKIACYQNDHLPLMEAYRDAGPIYPTHVIDSFATLIYMRDCGLNNEQVINCPPSELAEDYPFCLADKNLLPA.

The protein belongs to the PadC family.

In terms of biological role, catalyzes the decarboxylation of phenolic acids. The protein is Probable phenolic acid decarboxylase (padC) of Vibrio cholerae serotype O1 (strain ATCC 39315 / El Tor Inaba N16961).